A 1071-amino-acid polypeptide reads, in one-letter code: V-type proton ATPase catalytic subunit A (1071 aa).

N-acetylalanine is present on alanine 2. The residue at position 131 (threonine 131) is a Phosphothreonine. 257–264 (GAFGCGKT) contacts ATP. The region spanning 494 to 642 (LLGLWIGDGL…LVSLARSLGL (149 aa)) is the DOD-type homing endonuclease domain. Phosphoserine is present on residues serine 858 and serine 928.

Belongs to the ATPase alpha/beta chains family. V-ATPase is a heteromultimeric enzyme composed of a peripheral catalytic V1 complex (components A to H) attached to an integral membrane V0 proton pore complex (components: a, c, c', c'', d, e, f and VOA1). Interacts with RAV1 and RAV2 components of the RAVE complex, which are essential for the stability and assembly of V-ATPase. In terms of processing, this protein undergoes a protein self splicing that involves a post-translational excision of the VDE intervening region (intein) followed by peptide ligation.

The protein localises to the vacuole membrane. It carries out the reaction ATP + H2O + 4 H(+)(in) = ADP + phosphate + 5 H(+)(out). Its function is as follows. Catalytic subunit of the V1 complex of vacuolar(H+)-ATPase (V-ATPase), a multisubunit enzyme composed of a peripheral complex (V1) that hydrolyzes ATP and a membrane integral complex (V0) that translocates protons. V-ATPase is responsible for acidifying and maintaining the pH of intracellular compartments. PI-SceI is an endonuclease that can cleave at a site present in a VMA1 allele that lacks the derived endonuclease segment of the open reading frame; cleavage at this site only occurs during meiosis and initiates 'homing', a genetic event that converts a VMA1 allele lacking VDE into one that contains it. The polypeptide is V-type proton ATPase catalytic subunit A (Saccharomyces cerevisiae (strain ATCC 204508 / S288c) (Baker's yeast)).